A 208-amino-acid chain; its full sequence is Uracil phosphoribosyltransferase (208 aa).

5-phospho-alpha-D-ribose 1-diphosphate contacts are provided by residues Arg-78, Arg-103, and 130–138 (DPMLATGGS). Uracil contacts are provided by residues Ile-193 and 198–200 (GDA). A 5-phospho-alpha-D-ribose 1-diphosphate-binding site is contributed by Asp-199.

It belongs to the UPRTase family. It depends on Mg(2+) as a cofactor.

The enzyme catalyses UMP + diphosphate = 5-phospho-alpha-D-ribose 1-diphosphate + uracil. The protein operates within pyrimidine metabolism; UMP biosynthesis via salvage pathway; UMP from uracil: step 1/1. Its activity is regulated as follows. Allosterically activated by GTP. Its function is as follows. Catalyzes the conversion of uracil and 5-phospho-alpha-D-ribose 1-diphosphate (PRPP) to UMP and diphosphate. The sequence is that of Uracil phosphoribosyltransferase from Aliivibrio fischeri (strain MJ11) (Vibrio fischeri).